Here is a 170-residue protein sequence, read N- to C-terminus: Ankyrin repeat-containing protein C105.02c (170 aa).

ANK repeat units lie at residues 46-76 and 81-116; these read LGND…NLNN and TGDT…DPLL. A disordered region spans residues 150–170; the sequence is SADVVADDDDEEEGSGESDEE. Residues 154–170 show a composition bias toward acidic residues; sequence VADDDDEEEGSGESDEE.

It localises to the cytoplasm. The protein resides in the nucleus. This Schizosaccharomyces pombe (strain 972 / ATCC 24843) (Fission yeast) protein is Ankyrin repeat-containing protein C105.02c.